A 208-amino-acid chain; its full sequence is Phosphoheptose isomerase (208 aa).

In terms of domain architecture, SIS spans 38-200 (MAVTLAKGHK…LFENVLALQP (163 aa)). Residue 53 to 55 (NGG) coordinates substrate. His62 and Glu66 together coordinate Zn(2+). Substrate-binding positions include Glu66, 95-96 (ND), 121-123 (STS), Ser126, and Gln173. Zn(2+) contacts are provided by Gln173 and His181.

This sequence belongs to the SIS family. GmhA subfamily. In terms of assembly, homotetramer. It depends on Zn(2+) as a cofactor.

It is found in the cytoplasm. It catalyses the reaction 2 D-sedoheptulose 7-phosphate = D-glycero-alpha-D-manno-heptose 7-phosphate + D-glycero-beta-D-manno-heptose 7-phosphate. The protein operates within carbohydrate biosynthesis; D-glycero-D-manno-heptose 7-phosphate biosynthesis; D-glycero-alpha-D-manno-heptose 7-phosphate and D-glycero-beta-D-manno-heptose 7-phosphate from sedoheptulose 7-phosphate: step 1/1. Functionally, catalyzes the isomerization of sedoheptulose 7-phosphate in D-glycero-D-manno-heptose 7-phosphate. The polypeptide is Phosphoheptose isomerase (Nitratidesulfovibrio vulgaris (strain ATCC 29579 / DSM 644 / CCUG 34227 / NCIMB 8303 / VKM B-1760 / Hildenborough) (Desulfovibrio vulgaris)).